The chain runs to 444 residues: Tubulin beta chain (444 aa).

Residues Q11, E69, S138, G142, T143, G144, N204, and N226 each contribute to the GTP site. Mg(2+) is bound at residue E69.

Belongs to the tubulin family. In terms of assembly, dimer of alpha and beta chains. A typical microtubule is a hollow water-filled tube with an outer diameter of 25 nm and an inner diameter of 15 nM. Alpha-beta heterodimers associate head-to-tail to form protofilaments running lengthwise along the microtubule wall with the beta-tubulin subunit facing the microtubule plus end conferring a structural polarity. Microtubules usually have 13 protofilaments but different protofilament numbers can be found in some organisms and specialized cells. Mg(2+) is required as a cofactor.

The protein resides in the cytoplasm. The protein localises to the cytoskeleton. Tubulin is the major constituent of microtubules, a cylinder consisting of laterally associated linear protofilaments composed of alpha- and beta-tubulin heterodimers. Microtubules grow by the addition of GTP-tubulin dimers to the microtubule end, where a stabilizing cap forms. Below the cap, tubulin dimers are in GDP-bound state, owing to GTPase activity of alpha-tubulin. This is Tubulin beta chain from Euplotoides octocarinatus (Freshwater ciliate).